The following is a 283-amino-acid chain: Quinate/shikimate dehydrogenase (NAD(+)) (283 aa).

Positions 17, 69, 73, 94, and 110 each coordinate shikimate. Residues 17 to 19 (SRT), threonine 69, lysine 73, asparagine 94, and aspartate 110 each bind L-quinate. Residue lysine 73 is the Proton acceptor of the active site. Residues 137-138 (GV), aspartate 158, arginine 163, 203-206 (PMGM), alanine 213, valine 228, and glycine 251 contribute to the NAD(+) site. Glutamine 258 lines the shikimate pocket. Glutamine 258 provides a ligand contact to L-quinate.

This sequence belongs to the shikimate dehydrogenase family. As to quaternary structure, homodimer.

It carries out the reaction L-quinate + NAD(+) = 3-dehydroquinate + NADH + H(+). The enzyme catalyses shikimate + NAD(+) = 3-dehydroshikimate + NADH + H(+). It participates in metabolic intermediate biosynthesis; chorismate biosynthesis; chorismate from D-erythrose 4-phosphate and phosphoenolpyruvate: step 4/7. Its pathway is aromatic compound metabolism; 3,4-dihydroxybenzoate biosynthesis; 3-dehydroquinate from D-quinate (NAD(+) route). Involved in the biosynthesis of the chorismate, which leads to the biosynthesis of aromatic amino acids, and plays a key role in the quinate degradation pathway. Catalyzes the NAD(+)-dependent oxidation of both quinate and shikimate to 3-dehydroquinate and 3-dehydroshikimate, respectively. It can only use NAD. The protein is Quinate/shikimate dehydrogenase (NAD(+)) of Corynebacterium glutamicum (strain ATCC 13032 / DSM 20300 / JCM 1318 / BCRC 11384 / CCUG 27702 / LMG 3730 / NBRC 12168 / NCIMB 10025 / NRRL B-2784 / 534).